The sequence spans 729 residues: Transient receptor potential cation channel subfamily V member 5 (729 aa).

Topologically, residues 1–327 (MGGFLPKAEG…SFKWNKYGRP (327 aa)) are cytoplasmic. 6 ANK repeats span residues 44–74 (ILES…DVRQ), 78–107 (LGET…ELVF), 116–145 (AGQT…SVSA), 162–191 (FGEH…DIRA), 195–228 (LGNT…HGDH), and 239–268 (QGLT…HIQW). Residues 328 to 348 (YFCILAALYLLYMICFTTCCV) traverse the membrane as a helical segment. Residues 349–385 (YRPLKFRGGNRTHSRDITILQQKLLQEAYETREDIIR) are Extracellular-facing. N358 carries N-linked (GlcNAc...) asparagine glycosylation. The chain crosses the membrane as a helical span at residues 386 to 408 (LVGELVSIVGAVIILLLEIPDIF). Topologically, residues 409–419 (RVGASRYFGKT) are cytoplasmic. Residues 420 to 442 (ILGGPFHVIIITYASLVLVTMVM) traverse the membrane as a helical segment. The Extracellular portion of the chain corresponds to 443–448 (RLTNTN). Residues 449-469 (GEVVPMSFALVLGWCSVMYFT) form a helical membrane-spanning segment. Residues 470–492 (RGFQMLGPFTIMIQKMIFGDLMR) are Cytoplasmic-facing. The chain crosses the membrane as a helical span at residues 493 to 513 (FCWLMAVVILGFASAFYIIFQ). Residues 524-544 (YDYPMALFTTFELFLTVIDAP) constitute an intramembrane region (pore-forming). D542 contacts Ca(2+). The chain crosses the membrane as a helical span at residues 557–577 (IVNFAFTIIATLLMLNLFIAM). The Cytoplasmic portion of the chain corresponds to 578–729 (MGDTHWRVAQ…EGDGEEVYHF (152 aa)). The interval 598–602 (VATTV) is interaction with S100A10. The interval 650–653 (VFKN) is involved in Ca(2+)-dependent inactivation. Residues 654 to 665 (SDKEDDQEHPSE) show a composition bias toward basic and acidic residues. Positions 654-675 (SDKEDDQEHPSEKQPSGAESGT) are disordered. T685 carries the post-translational modification Phosphothreonine. S689 is subject to Phosphoserine. An involved in Ca(2+)-dependent inactivation region spans residues 700–729 (GWEILRQNTLGHLNLGLNLSEGDGEEVYHF).

The protein belongs to the transient receptor (TC 1.A.4) family. TrpV subfamily. TRPV5 sub-subfamily. As to quaternary structure, homotetramer and probably heterotetramer with TRPV6. Interacts with TRPV6. Interacts with S100A10 and probably with the ANAX2-S100A10 heterotetramer. The interaction with S100A10 is required for the trafficking to the plasma membrane. Interacts with calmodulin. Interacts with BSPRY, which results in its inactivation. Glycosylated. In terms of tissue distribution, expressed at high levels in kidney, small intestine and pancreas, and at lower levels in testis, prostate, placenta, brain, colon and rectum.

Its subcellular location is the apical cell membrane. It carries out the reaction Ca(2+)(in) = Ca(2+)(out). Its activity is regulated as follows. Activated by WNK3. Constitutively active calcium selective cation channel thought to be involved in Ca(2+) reabsorption in kidney and intestine. Required for normal Ca(2+) reabsorption in the kidney distal convoluted tubules. The channel is activated by low internal calcium level and the current exhibits an inward rectification. A Ca(2+)-dependent feedback regulation includes fast channel inactivation and slow current decay. Heteromeric assembly with TRPV6 seems to modify channel properties. TRPV5-TRPV6 heteromultimeric concatemers exhibit voltage-dependent gating. The polypeptide is Transient receptor potential cation channel subfamily V member 5 (TRPV5) (Homo sapiens (Human)).